The following is a 401-amino-acid chain: Imidazolonepropionase (401 aa).

Residues His-70 and His-72 each coordinate Fe(3+). The Zn(2+) site is built by His-70 and His-72. Residues Arg-79, Tyr-142, and His-175 each contribute to the 4-imidazolone-5-propanoate site. Position 142 (Tyr-142) interacts with N-formimidoyl-L-glutamate. His-238 contributes to the Fe(3+) binding site. His-238 is a binding site for Zn(2+). Gln-241 lines the 4-imidazolone-5-propanoate pocket. Residue Asp-313 coordinates Fe(3+). Residue Asp-313 coordinates Zn(2+). N-formimidoyl-L-glutamate-binding residues include Asn-315 and Gly-317. A 4-imidazolone-5-propanoate-binding site is contributed by Thr-318.

This sequence belongs to the metallo-dependent hydrolases superfamily. HutI family. Zn(2+) is required as a cofactor. Requires Fe(3+) as cofactor.

The protein localises to the cytoplasm. It carries out the reaction 4-imidazolone-5-propanoate + H2O = N-formimidoyl-L-glutamate. The protein operates within amino-acid degradation; L-histidine degradation into L-glutamate; N-formimidoyl-L-glutamate from L-histidine: step 3/3. Its function is as follows. Catalyzes the hydrolytic cleavage of the carbon-nitrogen bond in imidazolone-5-propanoate to yield N-formimidoyl-L-glutamate. It is the third step in the universal histidine degradation pathway. The protein is Imidazolonepropionase of Xanthomonas oryzae pv. oryzae (strain MAFF 311018).